The primary structure comprises 311 residues: Linearmycin resistance ATP-binding protein LnrL (311 aa).

The ABC transporter domain maps to 2-232 (LQAENIKKAY…LGGDTIIQLT (231 aa)). 34–41 (GPNGAGKS) is an ATP binding site.

The protein belongs to the ABC transporter superfamily. The complex is composed of two ATP-binding proteins (LnrL) and two transmembrane proteins (LnrM and LnrN).

Its function is as follows. Required for resistance to linearmycins, a family of antibiotic-specialized metabolites produced by some streptomycetes. Part of the ABC transporter complex LnrLMN that probably facilitates linearmycin removal from the membrane. Responsible for energy coupling to the transport system. Also mediates KinC-dependent biofilm morphology. The chain is Linearmycin resistance ATP-binding protein LnrL from Bacillus subtilis (strain 168).